The following is a 160-amino-acid chain: Allophycocyanin alpha chain (160 aa).

An N4-methylasparagine modification is found at Asn70. Cys80 serves as a coordination point for (2R,3E)-phycocyanobilin.

Belongs to the phycobiliprotein family. As to quaternary structure, component of the phycobilisome. Heterodimer of an alpha and a beta chain. Post-translationally, contains one covalently linked phycocyanobilin chromophore.

Its subcellular location is the cellular thylakoid membrane. In terms of biological role, light-harvesting photosynthetic bile pigment-protein from the phycobiliprotein complex. Allophycocyanin has a maximum absorption at approximately 650 nanometers. The sequence is that of Allophycocyanin alpha chain (apcA) from Anabaena cylindrica.